A 358-amino-acid polypeptide reads, in one-letter code: Peptide chain release factor 1 (358 aa).

Glutamine 233 carries the N5-methylglutamine modification.

This sequence belongs to the prokaryotic/mitochondrial release factor family. In terms of processing, methylated by PrmC. Methylation increases the termination efficiency of RF1.

It localises to the cytoplasm. In terms of biological role, peptide chain release factor 1 directs the termination of translation in response to the peptide chain termination codons UAG and UAA. The sequence is that of Peptide chain release factor 1 from Agathobacter rectalis (strain ATCC 33656 / DSM 3377 / JCM 17463 / KCTC 5835 / VPI 0990) (Eubacterium rectale).